We begin with the raw amino-acid sequence, 154 residues long: Myoglobin (154 aa).

Positions 2–148 constitute a Globin domain; sequence GLSDGEWQLV…FRNDIAAKYK (147 aa). Serine 4 carries the phosphoserine modification. Histidine 65 is a binding site for nitrite. Residue histidine 65 coordinates O2. Threonine 68 is modified (phosphothreonine). Histidine 94 lines the heme b pocket.

Monomer.

It localises to the cytoplasm. The protein localises to the sarcoplasm. It carries out the reaction Fe(III)-heme b-[protein] + nitric oxide + H2O = Fe(II)-heme b-[protein] + nitrite + 2 H(+). The catalysed reaction is H2O2 + AH2 = A + 2 H2O. Functionally, monomeric heme protein which primary function is to store oxygen and facilitate its diffusion within muscle tissues. Reversibly binds oxygen through a pentacoordinated heme iron and enables its timely and efficient release as needed during periods of heightened demand. Depending on the oxidative conditions of tissues and cells, and in addition to its ability to bind oxygen, it also has a nitrite reductase activity whereby it regulates the production of bioactive nitric oxide. Under stress conditions, like hypoxia and anoxia, it also protects cells against reactive oxygen species thanks to its pseudoperoxidase activity. This is Myoglobin from Hystrix cristata (North African crested porcupine).